The chain runs to 242 residues: Probable porphobilinogen deaminase (242 aa).

Belongs to the HMBS family.

It catalyses the reaction 4 porphobilinogen + H2O = hydroxymethylbilane + 4 NH4(+). The protein operates within porphyrin-containing compound metabolism; protoporphyrin-IX biosynthesis; coproporphyrinogen-III from 5-aminolevulinate: step 2/4. In terms of biological role, tetrapolymerization of the monopyrrole PBG into the hydroxymethylbilane pre-uroporphyrinogen in several discrete steps. The chain is Probable porphobilinogen deaminase (hemC) from Chlamydia muridarum (strain MoPn / Nigg).